A 728-amino-acid chain; its full sequence is 1,4-alpha-glucan branching enzyme GlgB (728 aa).

The active-site Nucleophile is the D405. The active-site Proton donor is the E458.

Belongs to the glycosyl hydrolase 13 family. GlgB subfamily. Monomer.

It catalyses the reaction Transfers a segment of a (1-&gt;4)-alpha-D-glucan chain to a primary hydroxy group in a similar glucan chain.. It participates in glycan biosynthesis; glycogen biosynthesis. Catalyzes the formation of the alpha-1,6-glucosidic linkages in glycogen by scission of a 1,4-alpha-linked oligosaccharide from growing alpha-1,4-glucan chains and the subsequent attachment of the oligosaccharide to the alpha-1,6 position. The chain is 1,4-alpha-glucan branching enzyme GlgB from Shigella flexneri.